The following is a 313-amino-acid chain: Epoxide hydrolase 1 (313 aa).

Residues Pro-25 to Ala-299 enclose the AB hydrolase-1 domain. Asp-100 acts as the Nucleophile in catalysis. Tyr-149 contributes to the an epoxide binding site. Tyr-227 functions as the Proton donor in the catalytic mechanism. The active-site Proton acceptor is the His-292.

The protein belongs to the AB hydrolase superfamily. Epoxide hydrolase family. As to quaternary structure, homodimer. Highly expressed in fruits 15 days after anthesis (15-DAA).

The catalysed reaction is an epoxide + H2O = an ethanediol. It carries out the reaction (24S)-24,25-epoxycucurbitadienol + H2O = (24R)-24,25-dihydroxycucurbitadienol. It functions in the pathway secondary metabolite biosynthesis; terpenoid biosynthesis. Epoxide hydrolase involved in the biosynthesis of cucurbitacin and mogroside tetracyclic triterpene natural products (e.g. siamenoside I and mogrosides IV, V and VI). Cucurbitacins have cytotoxic properties and exhibit deterrent taste as a defense barrier against herbivores. Mogrosides are nonsugar highly oxygenated compounds used as high-intensity zero-calorie sweeteners; they also possess pharmacological properties such as regulating immunity, lowering blood sugar and lipid levels, protecting the liver, and acting as antioxidants and antitumor agents. Catalyzes the hydrolysis of aromatic epoxide-containing substrates, such as the conversion of 24,25-epoxycucurbitadienol to 24,25-dihydroxycucurbitadienol. In Siraitia grosvenorii (Monk's fruit), this protein is Epoxide hydrolase 1.